The chain runs to 141 residues: Endoribonuclease YbeY (141 aa).

Residues histidine 107, histidine 111, and aspartate 117 each coordinate Zn(2+).

The protein belongs to the endoribonuclease YbeY family. Zn(2+) serves as cofactor.

It is found in the cytoplasm. Single strand-specific metallo-endoribonuclease involved in late-stage 70S ribosome quality control and in maturation of the 3' terminus of the 16S rRNA. This Endomicrobium trichonymphae protein is Endoribonuclease YbeY.